Reading from the N-terminus, the 618-residue chain is Isocitrate dehydrogenase kinase/phosphatase (618 aa).

Residues 332 to 338 and lysine 353 contribute to the ATP site; that span reads APGIKGM. Aspartate 388 is an active-site residue.

Belongs to the AceK family.

The protein resides in the cytoplasm. The catalysed reaction is L-seryl-[isocitrate dehydrogenase] + ATP = O-phospho-L-seryl-[isocitrate dehydrogenase] + ADP + H(+). Bifunctional enzyme which can phosphorylate or dephosphorylate isocitrate dehydrogenase (IDH) on a specific serine residue. This is a regulatory mechanism which enables bacteria to bypass the Krebs cycle via the glyoxylate shunt in response to the source of carbon. When bacteria are grown on glucose, IDH is fully active and unphosphorylated, but when grown on acetate or ethanol, the activity of IDH declines drastically concomitant with its phosphorylation. The sequence is that of Isocitrate dehydrogenase kinase/phosphatase from Methylibium petroleiphilum (strain ATCC BAA-1232 / LMG 22953 / PM1).